The following is a 192-amino-acid chain: MKLIAAVLAGGKSRRFGEDKLLFEINGKPLILHTIDRLEKCNLIKRVVIVASSHNEKVMREFGYEVIVDELEIGPISGLYSALSLGEVLVVGGDMPSLIPEFIDYIIKEFNNSRKIACVPRWSNGYLEPLHAAYSREFREILGERIRKGKYKLGDAIREIPNVCYISIEKLPVEWRESFFNVNRKEDLHIIT.

GTP-binding positions include 8 to 10 (LAG), lysine 20, aspartate 69, and aspartate 94. Residue aspartate 94 coordinates Mg(2+).

This sequence belongs to the MobA family. Requires Mg(2+) as cofactor.

It is found in the cytoplasm. The enzyme catalyses Mo-molybdopterin + GTP + H(+) = Mo-molybdopterin guanine dinucleotide + diphosphate. In terms of biological role, transfers a GMP moiety from GTP to Mo-molybdopterin (Mo-MPT) cofactor (Moco or molybdenum cofactor) to form Mo-molybdopterin guanine dinucleotide (Mo-MGD) cofactor. In Pyrococcus horikoshii (strain ATCC 700860 / DSM 12428 / JCM 9974 / NBRC 100139 / OT-3), this protein is Probable molybdenum cofactor guanylyltransferase.